Reading from the N-terminus, the 435-residue chain is Methylenetetrahydrofolate--tRNA-(uracil-5-)-methyltransferase TrmFO (435 aa).

G7–G12 contributes to the FAD binding site.

Belongs to the MnmG family. TrmFO subfamily. It depends on FAD as a cofactor.

Its subcellular location is the cytoplasm. It carries out the reaction uridine(54) in tRNA + (6R)-5,10-methylene-5,6,7,8-tetrahydrofolate + NADH + H(+) = 5-methyluridine(54) in tRNA + (6S)-5,6,7,8-tetrahydrofolate + NAD(+). The catalysed reaction is uridine(54) in tRNA + (6R)-5,10-methylene-5,6,7,8-tetrahydrofolate + NADPH + H(+) = 5-methyluridine(54) in tRNA + (6S)-5,6,7,8-tetrahydrofolate + NADP(+). Functionally, catalyzes the folate-dependent formation of 5-methyl-uridine at position 54 (M-5-U54) in all tRNAs. The sequence is that of Methylenetetrahydrofolate--tRNA-(uracil-5-)-methyltransferase TrmFO from Thermotoga sp. (strain RQ2).